A 438-amino-acid polypeptide reads, in one-letter code: Acid phosphatase type 7 (438 aa).

The signal sequence occupies residues 1-26 (MHPLPGYWSCYCLLLLFSLGVQGSLG). The Fe cation site is built by Asp141, Asp170, and Tyr173. Asp170 is a binding site for Zn(2+). Asn205 contacts Zn(2+). An N-linked (GlcNAc...) asparagine glycan is attached at Asn211. The Zn(2+) site is built by His286 and His333. His335 is a Fe cation binding site. Residues Asn350 and Asn404 are each glycosylated (N-linked (GlcNAc...) asparagine).

This sequence belongs to the metallophosphoesterase superfamily. Purple acid phosphatase family. It depends on Fe cation as a cofactor. Zn(2+) serves as cofactor.

The protein localises to the secreted. It catalyses the reaction a phosphate monoester + H2O = an alcohol + phosphate. This chain is Acid phosphatase type 7, found in Homo sapiens (Human).